The primary structure comprises 233 residues: Transmembrane protein 40 (233 aa).

Methionine 1 is subject to N-acetylmethionine. The span at methionine 1–serine 14 shows a compositional bias: polar residues. A disordered region spans residues methionine 1–glutamate 143. Residues serine 50 to serine 70 show a composition bias toward low complexity. Residues tyrosine 93–histidine 104 show a composition bias toward gly residues. Positions glycine 105–leucine 114 are enriched in basic and acidic residues. Residue serine 137 is modified to Phosphoserine. 2 helical membrane-spanning segments follow: residues phenylalanine 160 to tyrosine 180 and leucine 187 to valine 207.

Its subcellular location is the membrane. The chain is Transmembrane protein 40 (TMEM40) from Homo sapiens (Human).